Consider the following 62-residue polypeptide: Large ribosomal subunit protein bL28 (62 aa).

Residues 1 to 24 (MGKQCFVTGRKASTGNNRSHALNS) form a disordered region. Residues 11–24 (KASTGNNRSHALNS) show a composition bias toward polar residues.

It belongs to the bacterial ribosomal protein bL28 family.

The protein is Large ribosomal subunit protein bL28 of Staphylococcus saprophyticus subsp. saprophyticus (strain ATCC 15305 / DSM 20229 / NCIMB 8711 / NCTC 7292 / S-41).